The primary structure comprises 246 residues: tRNA pseudouridine synthase A (246 aa).

The active-site Nucleophile is Asp54. Tyr112 is a binding site for substrate.

Belongs to the tRNA pseudouridine synthase TruA family. In terms of assembly, homodimer.

The enzyme catalyses uridine(38/39/40) in tRNA = pseudouridine(38/39/40) in tRNA. In terms of biological role, formation of pseudouridine at positions 38, 39 and 40 in the anticodon stem and loop of transfer RNAs. The protein is tRNA pseudouridine synthase A of Moorella thermoacetica (strain ATCC 39073 / JCM 9320).